Reading from the N-terminus, the 217-residue chain is Acyl-homoserine-lactone synthase (217 aa).

It belongs to the autoinducer synthase family.

It carries out the reaction a fatty acyl-[ACP] + S-adenosyl-L-methionine = an N-acyl-L-homoserine lactone + S-methyl-5'-thioadenosine + holo-[ACP] + H(+). Its function is as follows. Required for the synthesis of OHHL (N-(3-oxohexanoyl)-L-homoserine lactone), an autoinducer molecule which binds to ExpR and thus acts in virulence (soft rot disease) through the activation of genes for plant tissue macerating enzymes. The chain is Acyl-homoserine-lactone synthase (expI) from Pectobacterium parmentieri.